Here is a 162-residue protein sequence, read N- to C-terminus: uncharacterized protein (162 aa).

It to R.meliloti R02472.

This is an uncharacterized protein from Escherichia coli (strain K12).